Consider the following 974-residue polypeptide: ATP-dependent RNA helicase glh-2 (974 aa).

Positions 212–435 (HESGFGGGKS…SGFGGGNDGG (224 aa)) are disordered. Residues 215–250 (GFGGGKSGGFGGGNSGGSGFGSGGNSNGFGSGGGGQ) show a composition bias toward gly residues. The span at 256–267 (NNNCFNCQQPGH) shows a compositional bias: polar residues. CCHC-type zinc fingers lie at residues 257–274 (NNCFNCQQPGHRSNDCPE) and 282–299 (RVCYNCQQPGHNSRDCPE). Composition is skewed to basic and acidic residues over residues 268–282 (RSNDCPEPKKEREPR) and 293–307 (NSRDCPEERKPREGR). Gly residues predominate over residues 309–364 (GFTGGSSGFGGGNGGGTGFDSGLTNGFGSGNNGESGFGSGGFGGNSNGFGSGGGGQ). Over residues 370 to 381 (NNNCFNCQQPGH) the composition is skewed to polar residues. 2 consecutive CCHC-type zinc fingers follow at residues 371 to 388 (NNCFNCQQPGHRSNDCPE) and 396 to 413 (RVCYNCQQPGHNSRDCPE). Basic and acidic residues-rich tracts occupy residues 382 to 396 (RSNDCPEPKKEREPR) and 407 to 421 (NSRDCPEERKPREGR). A compositionally biased stretch (gly residues) spans 426-435 (SGFGGGNDGG). 2 CCHC-type zinc fingers span residues 453–470 (MKCFNCKGEGHRSAECPE) and 473–490 (RGCFNCGEQGHRSNECPN). The Q motif signature appears at 552 to 580 (KTFSEANLGETMKKNVAHAGYTKTTPIQQ). The region spanning 583–767 (LPLIHQGHDI…RNHLKEGYIM (185 aa)) is the Helicase ATP-binding domain. 596–603 (AQTGSGKT) contacts ATP. The short motif at 710 to 713 (DEAD) is the DEAD box element. Residues 803 to 950 (DIDSYTTEKN…LVPEWMQGAS (148 aa)) form the Helicase C-terminal domain.

The protein belongs to the DEAD box helicase family. DDX4/VASA subfamily. As to quaternary structure, interacts (via C-terminus) with kgb-1.

The catalysed reaction is ATP + H2O = ADP + phosphate + H(+). Its function is as follows. Probable ATP-binding RNA helicase. The sequence is that of ATP-dependent RNA helicase glh-2 (glh-2) from Caenorhabditis elegans.